Reading from the N-terminus, the 340-residue chain is Outer membrane protein B (340 aa).

Residues Met1–Ala26 form the signal peptide.

This sequence belongs to the chlamydial OMP family.

The protein resides in the cell outer membrane. The sequence is that of Outer membrane protein B (ompB) from Chlamydia trachomatis serovar D (strain ATCC VR-885 / DSM 19411 / UW-3/Cx).